Reading from the N-terminus, the 366-residue chain is Histidinol-phosphate aminotransferase 2 (366 aa).

N6-(pyridoxal phosphate)lysine is present on Lys-226.

The protein belongs to the class-II pyridoxal-phosphate-dependent aminotransferase family. Histidinol-phosphate aminotransferase subfamily. As to quaternary structure, homodimer. The cofactor is pyridoxal 5'-phosphate.

It catalyses the reaction L-histidinol phosphate + 2-oxoglutarate = 3-(imidazol-4-yl)-2-oxopropyl phosphate + L-glutamate. It participates in amino-acid biosynthesis; L-histidine biosynthesis; L-histidine from 5-phospho-alpha-D-ribose 1-diphosphate: step 7/9. The chain is Histidinol-phosphate aminotransferase 2 from Cupriavidus pinatubonensis (strain JMP 134 / LMG 1197) (Cupriavidus necator (strain JMP 134)).